The sequence spans 190 residues: Heme-binding protein 1 (190 aa).

It belongs to the HEBP family. In terms of assembly, monomer.

It is found in the cytoplasm. May bind free porphyrinogens that may be present in the cell and thus facilitate removal of these potentially toxic compound. Binds with a high affinity to one molecule of heme or porphyrins. It binds metalloporphyrins, free porphyrins and N-methylprotoporphyrin with similar affinities. The chain is Heme-binding protein 1 (hebp1) from Xenopus laevis (African clawed frog).